We begin with the raw amino-acid sequence, 453 residues long: MLGKAEKRSEALAAEALAYMPGFGNDFETESLPGALPQGQNSPQKCNYGLYAEQLSGSPFTAPRGTNERSWLYRIRPSVRHTGRFAKIDYPHWKTAPHIAEHALALGQLRWNPLPEPTGELNFLQGIRTMTTAGDVLTQVGMAAHAYVFNADMVDDYFFNADGELLIVPEMGALQVFTELGKMDVAPSEICLVPRGTMFKVARLGEEKAWRGYICENYGAKFTLPDRGPIGANCLANPRDFKTPVAAFEDKETPCRVQVKWCGSFHTVEIGHSPLDVVAWHGNYAPYKYDLKTFSPVGAILFDHPDPSIFTVLTAPSGEEGTANVDFVLFPPRWLVAEHTFRPPWYHRNIMSEFMGLIHGRYDAKEEGFVPGGMSLHNMMLAHGPDTSGFEKATNGELKPVKLDNTMAFMFETRFPQQLTRFAAELETLQDDYIDCWAGLRKRFNGTPEGDWS.

His304 serves as the catalytic Proton acceptor. Fe cation contacts are provided by His347 and Glu353. Homogentisate contacts are provided by Tyr362 and His383. His383 serves as a coordination point for Fe cation.

This sequence belongs to the homogentisate dioxygenase family. Hexamer; dimer of trimers. Fe cation serves as cofactor.

The enzyme catalyses homogentisate + O2 = 4-maleylacetoacetate + H(+). Its pathway is amino-acid degradation; L-phenylalanine degradation; acetoacetate and fumarate from L-phenylalanine: step 4/6. Functionally, involved in the catabolism of homogentisate (2,5-dihydroxyphenylacetate or 2,5-OH-PhAc), a central intermediate in the degradation of phenylalanine and tyrosine. Catalyzes the oxidative ring cleavage of the aromatic ring of homogentisate to yield maleylacetoacetate. The polypeptide is Homogentisate 1,2-dioxygenase (Sinorhizobium fredii (strain NBRC 101917 / NGR234)).